A 510-amino-acid chain; its full sequence is 2,3-bisphosphoglycerate-independent phosphoglycerate mutase (510 aa).

Positions 13 and 63 each coordinate Mn(2+). The active-site Phosphoserine intermediate is Ser-63. Residues His-124, 154-155, Arg-186, Arg-192, 262-265, and Lys-334 each bind substrate; these read RD and RADR. Residues Asp-401, His-405, Asp-442, His-443, and His-461 each contribute to the Mn(2+) site.

This sequence belongs to the BPG-independent phosphoglycerate mutase family. In terms of assembly, monomer. It depends on Mn(2+) as a cofactor.

It carries out the reaction (2R)-2-phosphoglycerate = (2R)-3-phosphoglycerate. The protein operates within carbohydrate degradation; glycolysis; pyruvate from D-glyceraldehyde 3-phosphate: step 3/5. In terms of biological role, catalyzes the interconversion of 2-phosphoglycerate and 3-phosphoglycerate. The polypeptide is 2,3-bisphosphoglycerate-independent phosphoglycerate mutase (Aliivibrio fischeri (strain MJ11) (Vibrio fischeri)).